We begin with the raw amino-acid sequence, 136 residues long: Ribosome-binding factor A (136 aa).

Residues 114-136 (DRANRPGPAADEPDEPDEPEDRR) form a disordered region. Residues 124 to 136 (DEPDEPDEPEDRR) show a composition bias toward acidic residues.

This sequence belongs to the RbfA family. As to quaternary structure, monomer. Binds 30S ribosomal subunits, but not 50S ribosomal subunits or 70S ribosomes.

The protein resides in the cytoplasm. Functionally, one of several proteins that assist in the late maturation steps of the functional core of the 30S ribosomal subunit. Associates with free 30S ribosomal subunits (but not with 30S subunits that are part of 70S ribosomes or polysomes). Required for efficient processing of 16S rRNA. May interact with the 5'-terminal helix region of 16S rRNA. In Bordetella petrii (strain ATCC BAA-461 / DSM 12804 / CCUG 43448), this protein is Ribosome-binding factor A.